Reading from the N-terminus, the 110-residue chain is MKLLLAIAGLFLVQTLAEDVRAHEESSFLAAVAPEEQRACIKEGEKCAGDCQCCGKWSYCSCPLFGALGCSCIIGDAMVCVRKKKECRTSDVMNTPPGGCFSSSKRRHGR.

The first 17 residues, 1 to 17 (MKLLLAIAGLFLVQTLA), serve as a signal peptide directing secretion. Residues 18–38 (EDVRAHEESSFLAAVAPEEQR) constitute a propeptide that is removed on maturation. Intrachain disulfides connect Cys40–Cys54, Cys47–Cys60, Cys51–Cys87, Cys53–Cys72, and Cys62–Cys70.

It belongs to the neurotoxin 37 family. In terms of tissue distribution, expressed by the venom gland.

Its subcellular location is the secreted. In Agelena orientalis (Funnel-web spider), this protein is U9-agatoxin-Ao1a.